Consider the following 141-residue polypeptide: Hemoglobin subunit alpha-2 (141 aa).

The region spanning 1 to 141 (VLTEDDKNHV…VCKDLVSKYR (141 aa)) is the Globin domain. H58 lines the O2 pocket. Residue H87 coordinates heme b.

Belongs to the globin family. As to quaternary structure, the major hemoglobin component (HbIII) is a heterotetramer of two alpha-2 chains and two beta-1 chains. Red blood cells.

Involved in oxygen transport from the lung to the various peripheral tissues. The protein is Hemoglobin subunit alpha-2 of Varanus albigularis (White-throated monitor).